The primary structure comprises 129 residues: MSNIPAELKYSKEHEWLRKEADGTYTVGITEHAQELLGDMVFVDLPEVGATVSAGDDCAVAESVKAASDIYAPVSGEIVAVNDALSDSPELVNSEPYAGGWIFKIKASDESELESLLDATAYEALLEDE.

The Lipoyl-binding domain maps to 24–106 (TYTVGITEHA…YAGGWIFKIK (83 aa)). Residue K65 is modified to N6-lipoyllysine.

It belongs to the GcvH family. In terms of assembly, the glycine cleavage system is composed of four proteins: P, T, L and H. The cofactor is (R)-lipoate.

The glycine cleavage system catalyzes the degradation of glycine. The H protein shuttles the methylamine group of glycine from the P protein to the T protein. The chain is Glycine cleavage system H protein from Escherichia coli O45:K1 (strain S88 / ExPEC).